A 650-amino-acid polypeptide reads, in one-letter code: 1-deoxy-D-xylulose-5-phosphate synthase (650 aa).

Residues His87 and 128-130 (GHS) each bind thiamine diphosphate. Asp159 lines the Mg(2+) pocket. Residues 160–161 (GS), Asn188, Tyr299, and Glu383 contribute to the thiamine diphosphate site. Asn188 is a Mg(2+) binding site.

The protein belongs to the transketolase family. DXPS subfamily. Homodimer. Mg(2+) serves as cofactor. Requires thiamine diphosphate as cofactor.

It catalyses the reaction D-glyceraldehyde 3-phosphate + pyruvate + H(+) = 1-deoxy-D-xylulose 5-phosphate + CO2. It functions in the pathway metabolic intermediate biosynthesis; 1-deoxy-D-xylulose 5-phosphate biosynthesis; 1-deoxy-D-xylulose 5-phosphate from D-glyceraldehyde 3-phosphate and pyruvate: step 1/1. Its function is as follows. Catalyzes the acyloin condensation reaction between C atoms 2 and 3 of pyruvate and glyceraldehyde 3-phosphate to yield 1-deoxy-D-xylulose-5-phosphate (DXP). This is 1-deoxy-D-xylulose-5-phosphate synthase from Syntrophus aciditrophicus (strain SB).